We begin with the raw amino-acid sequence, 316 residues long: Coproporphyrin III ferrochelatase (316 aa).

Fe-coproporphyrin III contacts are provided by residues Tyr-13, Arg-30, 46–47 (RY), Ser-54, and Tyr-125. Residues His-183 and Glu-264 each contribute to the Fe(2+) site.

The protein belongs to the ferrochelatase family.

It is found in the cytoplasm. It carries out the reaction Fe-coproporphyrin III + 2 H(+) = coproporphyrin III + Fe(2+). The protein operates within porphyrin-containing compound metabolism; protoheme biosynthesis. Functionally, involved in coproporphyrin-dependent heme b biosynthesis. Catalyzes the insertion of ferrous iron into coproporphyrin III to form Fe-coproporphyrin III. In Geobacillus thermodenitrificans (strain NG80-2), this protein is Coproporphyrin III ferrochelatase.